Consider the following 473-residue polypeptide: Response regulator protein FleR (473 aa).

Positions 4–118 constitute a Response regulatory domain; sequence KVLLVEDDRA…ALLDLVARHA (115 aa). D53 is subject to 4-aspartylphosphate. A Sigma-54 factor interaction domain is found at 130-359; the sequence is PVALEPASRQ…LDNAIQRALI (230 aa). Residues 158-165 and 221-230 contribute to the ATP site; these read GESGTGKE and ADGGTILLDE.

Functionally, member of the two-component regulatory system FleS/FleR that regulates the expression of multiple genes involved in flagellar synthesis, adhesion, swarming, motility and antibiotic resistance. May function as a transcriptional activator by direct binding to a cis-acting sequence upstream of the target genes. The polypeptide is Response regulator protein FleR (Pseudomonas aeruginosa (strain ATCC 15692 / DSM 22644 / CIP 104116 / JCM 14847 / LMG 12228 / 1C / PRS 101 / PAO1)).